Reading from the N-terminus, the 675-residue chain is E3 ubiquitin-protein ligase COP1 (675 aa).

The tract at residues 1–40 is disordered; sequence MEEISTDPVVPAVKPDPRTSSVGEGANRHENDDGGSGGSE. 8 residues coordinate Zn(2+): cysteine 52, cysteine 55, cysteine 67, histidine 69, cysteine 72, cysteine 75, cysteine 86, and cysteine 89. Residues 52–90 form an RING-type zinc finger; that stretch reads CPICMQIIKDAFLTACGHSFCYMCIITHLRNKSDCPCCS. The CLS (cytoplasmic localization signal) stretch occupies residues 67 to 177; it reads CGHSFCYMCI…LDFLHCLRKQ (111 aa). The segment at 120 to 177 is SNLS (subnuclear localization signal); sequence ASPLDQFREALQRGCDVSIKEVDNLLTLLAERKRKMEQEEAERNMQILLDFLHCLRKQ. Positions 134 to 201 form a coiled coil; sequence CDVSIKEVDN…IKEDINAVER (68 aa). The disordered stretch occupies residues 261–290; the sequence is EGKAQGSSHGLPKKDALSGSDSQSLNQSTV. Residues 279 to 290 are compositionally biased toward polar residues; it reads GSDSQSLNQSTV. Residues 294–317 carry the Bipartite nuclear localization signal motif; the sequence is RKKRIHAQFNDLQECYLQKRRQLA. WD repeat units follow at residues 369-408, 418-458, 461-501, 503-543, 547-585, 588-627, and 642-675; these read HSAN…NEPA, STRS…SLME, EHEK…SVIN, DMKA…QPLH, GHKK…PVRT, GHTN…PVTS, and AGSY…VLAA. Positions 593 to 595 are binding of human TRIB1 COP1-binding-motif; that stretch reads KNF.

In terms of assembly, homodimer. Interacts with HY5, HYH, BBX24/STO, BBX25/STH, CIP8, COP10, SPA1, SPA2, SPA3, SPA4 and UVR8 and phosphorylated PHYA. Light induces dissociation of the SPA1/COP1 complex. Interacts with HRT/RPP8 and triggers it to the 26s proteasome. Binds to CRY2; this competitive interaction prevents triggering to proteasome of other binding proteins. Binds to SHW1 in the nucleus. Bonds to CIP7. Interacts with CSU2. Binds to CIP1. Interacts directly with DHU1. Associates to UNE10/PIF8. Binds directly to PCH1 and PCHL. Post-translationally, autoubiquitinated.

The protein localises to the nucleus. It is found in the cytoplasm. The catalysed reaction is S-ubiquitinyl-[E2 ubiquitin-conjugating enzyme]-L-cysteine + [acceptor protein]-L-lysine = [E2 ubiquitin-conjugating enzyme]-L-cysteine + N(6)-ubiquitinyl-[acceptor protein]-L-lysine.. The protein operates within protein modification; protein ubiquitination. E3 ubiquitin-protein ligase that acts as a repressor of photomorphogenesis and as an activator of etiolation in darkness. E3 ubiquitin ligases accept ubiquitin from an E2 ubiquitin-conjugating enzyme in the form of a thioester and then directly transfers the ubiquitin to targeted substrates. Represses photomorphogenesis in darkness by mediating ubiquitination and subsequent proteasomal degradation of light-induced transcription factors such as HY5, HYH and LAF1. Down-regulates MYB21, probably via ubiquitination process. Light stimuli abrogate the repression of photomorphogenesis, possibly due to its localization to the cytoplasm. Could play a role in switching between skotomorphogenetic and photomorphogenetic pathways. Mediates the ubiquitination-dependent degradation of HY5 in the darkness during seedling development (e.g. hypocotyl growth). Represses CIP7 in darkness. Triggers ubiquitination and subsequent protein degradation of UNE10/PIF8, PCH1 and PCHL in the dark. The sequence is that of E3 ubiquitin-protein ligase COP1 from Arabidopsis thaliana (Mouse-ear cress).